The primary structure comprises 601 residues: Invasin CotH3 (601 aa).

The signal sequence occupies residues 1–17 (MKLSIISAAFLVAITHA). 10 N-linked (GlcNAc...) asparagine glycosylation sites follow: Asn28, Asn85, Asn170, Asn324, Asn449, Asn527, Asn541, Asn554, Asn561, and Asn571. Positions 539 to 579 (SANGTTAAAPAPAAGNSTGKGGNQSISSSASSNKTSAQSTS) are enriched in low complexity. The disordered stretch occupies residues 539 to 581 (SANGTTAAAPAPAAGNSTGKGGNQSISSSASSNKTSAQSTSGA). Ser579 is lipidated: GPI-anchor amidated serine. Positions 580–601 (GASRSKTAPIVLAISALALLVF) are cleaved as a propeptide — removed in mature form.

In terms of assembly, interacts with HSPA5/BiP on the cell surface of host nasal epithelial cells.

It is found in the cell membrane. In terms of biological role, promotes invasion of host epithelial cells by adhering to receptors on the host cell surface to facilitate endocytosis of the pathogen into host cells. Binds HSPA5/BiP protein on the cell surface of host nasal epithelial cells. The sequence is that of Invasin CotH3 from Rhizopus delemar (strain RA 99-880 / ATCC MYA-4621 / FGSC 9543 / NRRL 43880) (Mucormycosis agent).